The following is a 268-amino-acid chain: MPITPRHLRQWKQQGRPIVALTAWDFAIASILDEAGIDLVLVGDSLAMVALGHPTTLPLSLEDMIHHVQAVQRGCRNALIVSDLPFLSYQTSPEDAILAAGQLLKVTEAQAVKLEGGYPRLLETVQRLVEVGIPVMGHVGLTPQSVRQLGYRQQGQTPEAQQQILDQALALEAAGAFAIVLEHIPDRLAAMITAKLSIPTIGIGAGPNCDGQILVTADLLGLTPSQPPFAPAYLNLRQAIGSAVQRYAREVRDRQFLQSQPAEQEPLS.

Mg(2+) contacts are provided by Asp44 and Asp83. 3-methyl-2-oxobutanoate-binding positions include 44 to 45 (DS), Asp83, and Lys113. Glu115 contacts Mg(2+). Glu182 serves as the catalytic Proton acceptor.

It belongs to the PanB family. In terms of assembly, homodecamer; pentamer of dimers. Mg(2+) is required as a cofactor.

The protein localises to the cytoplasm. It catalyses the reaction 3-methyl-2-oxobutanoate + (6R)-5,10-methylene-5,6,7,8-tetrahydrofolate + H2O = 2-dehydropantoate + (6S)-5,6,7,8-tetrahydrofolate. It participates in cofactor biosynthesis; (R)-pantothenate biosynthesis; (R)-pantoate from 3-methyl-2-oxobutanoate: step 1/2. In terms of biological role, catalyzes the reversible reaction in which hydroxymethyl group from 5,10-methylenetetrahydrofolate is transferred onto alpha-ketoisovalerate to form ketopantoate. In Synechococcus elongatus (strain ATCC 33912 / PCC 7942 / FACHB-805) (Anacystis nidulans R2), this protein is 3-methyl-2-oxobutanoate hydroxymethyltransferase.